Here is a 355-residue protein sequence, read N- to C-terminus: Gibberellin 3-beta-dioxygenase 4 (355 aa).

The 101-residue stretch at 203 to 303 (GRGAIRLNHY…RISIAYLWGG (101 aa)) folds into the Fe2OG dioxygenase domain. Residues histidine 227, aspartate 229, and histidine 284 each coordinate Fe cation. Arginine 294 is an active-site residue.

The protein belongs to the iron/ascorbate-dependent oxidoreductase family. GA3OX subfamily. L-ascorbate serves as cofactor. The cofactor is Fe cation. Expressed in siliques and in seeds, specifically at the rim of the embryo and the outer integument. Also expressed in flowers. Not detected in roots, stems and leaves.

The catalysed reaction is gibberellin A20 + 2-oxoglutarate + O2 = gibberellin A1 + succinate + CO2. It functions in the pathway plant hormone biosynthesis; gibberellin biosynthesis. Functionally, converts the inactive gibberellin (GA) precursors GA9 and GA20 in the bioactives gibberellins GA4 and GA1. Involved in the production of bioactive GA for reproductive development. The polypeptide is Gibberellin 3-beta-dioxygenase 4 (Arabidopsis thaliana (Mouse-ear cress)).